A 538-amino-acid polypeptide reads, in one-letter code: Bifunctional purine biosynthesis protein PurH (538 aa).

Residues 8–158 enclose the MGS-like domain; the sequence is FPIPDLHRVR…KNHVYTGVIT (151 aa).

The protein belongs to the PurH family.

It catalyses the reaction (6R)-10-formyltetrahydrofolate + 5-amino-1-(5-phospho-beta-D-ribosyl)imidazole-4-carboxamide = 5-formamido-1-(5-phospho-D-ribosyl)imidazole-4-carboxamide + (6S)-5,6,7,8-tetrahydrofolate. The enzyme catalyses IMP + H2O = 5-formamido-1-(5-phospho-D-ribosyl)imidazole-4-carboxamide. The protein operates within purine metabolism; IMP biosynthesis via de novo pathway; 5-formamido-1-(5-phospho-D-ribosyl)imidazole-4-carboxamide from 5-amino-1-(5-phospho-D-ribosyl)imidazole-4-carboxamide (10-formyl THF route): step 1/1. Its pathway is purine metabolism; IMP biosynthesis via de novo pathway; IMP from 5-formamido-1-(5-phospho-D-ribosyl)imidazole-4-carboxamide: step 1/1. This is Bifunctional purine biosynthesis protein PurH from Bartonella henselae (strain ATCC 49882 / DSM 28221 / CCUG 30454 / Houston 1) (Rochalimaea henselae).